The primary structure comprises 422 residues: UDP-N-acetylglucosamine 1-carboxyvinyltransferase (422 aa).

Residue 22-23 coordinates phosphoenolpyruvate; sequence KN. R95 provides a ligand contact to UDP-N-acetyl-alpha-D-glucosamine. The active-site Proton donor is the C119. C119 carries the 2-(S-cysteinyl)pyruvic acid O-phosphothioketal modification. UDP-N-acetyl-alpha-D-glucosamine contacts are provided by residues 124–128, D309, and V331; that span reads RPIDQ.

This sequence belongs to the EPSP synthase family. MurA subfamily.

The protein localises to the cytoplasm. It carries out the reaction phosphoenolpyruvate + UDP-N-acetyl-alpha-D-glucosamine = UDP-N-acetyl-3-O-(1-carboxyvinyl)-alpha-D-glucosamine + phosphate. It functions in the pathway cell wall biogenesis; peptidoglycan biosynthesis. Its function is as follows. Cell wall formation. Adds enolpyruvyl to UDP-N-acetylglucosamine. In Anaeromyxobacter sp. (strain Fw109-5), this protein is UDP-N-acetylglucosamine 1-carboxyvinyltransferase.